The following is a 228-amino-acid chain: Transcription termination/antitermination protein NusG (228 aa).

The protein belongs to the NusG family.

Participates in transcription elongation, termination and antitermination. The chain is Transcription termination/antitermination protein NusG from Mycobacterium leprae (strain TN).